A 213-amino-acid polypeptide reads, in one-letter code: Large ribosomal subunit protein uL1 (213 aa).

This sequence belongs to the universal ribosomal protein uL1 family. Part of the 50S ribosomal subunit.

Binds directly to 23S rRNA. Probably involved in E site tRNA release. Functionally, protein L1 is also a translational repressor protein, it controls the translation of its operon by binding to its mRNA. The sequence is that of Large ribosomal subunit protein uL1 from Methanococcoides burtonii (strain DSM 6242 / NBRC 107633 / OCM 468 / ACE-M).